The primary structure comprises 164 residues: UBA-like domain-containing protein 2 (164 aa).

N-acetylserine is present on S2. The interval S128–R164 is disordered. Residues G146 to R164 show a composition bias toward low complexity.

Belongs to the UBALD family.

The chain is UBA-like domain-containing protein 2 (UBALD2) from Homo sapiens (Human).